A 198-amino-acid polypeptide reads, in one-letter code: Peroxiredoxin-2 (198 aa).

Residue Ala2 is modified to N-acetylalanine. The Thioredoxin domain maps to 6-164 (AHIGKPAPDF…ALRLVQAFQY (159 aa)). The active-site Cysteine sulfenic acid (-SOH) intermediate is Cys51. Position 112 is a phosphoserine (Ser112). Phosphothreonine is present on Thr182. N6-acetyllysine is present on Lys196.

It belongs to the peroxiredoxin family. AhpC/Prx1 subfamily. In terms of assembly, homodimer; disulfide-linked, upon oxidation. 5 homodimers assemble to form a ring-like decamer. Interacts with TIPIN. Post-translationally, the enzyme can be inactivated by further oxidation of the cysteine sulfenic acid (C(P)-SOH) to sulphinic acid (C(P)-SO2H) instead of its condensation to a disulfide bond. It can be reactivated by forming a transient disulfide bond with sulfiredoxin SRXN1, which reduces the cysteine sulfinic acid in an ATP- and Mg-dependent manner. In terms of processing, acetylation increases resistance to transition to high molecular-mass complexes. Deacetylated by HDAC6 which decreases reducing activity.

It localises to the cytoplasm. It catalyses the reaction a hydroperoxide + [thioredoxin]-dithiol = an alcohol + [thioredoxin]-disulfide + H2O. Functionally, thiol-specific peroxidase that catalyzes the reduction of hydrogen peroxide and organic hydroperoxides to water and alcohols, respectively. Plays a role in cell protection against oxidative stress by detoxifying peroxides and as sensor of hydrogen peroxide-mediated signaling events. Might participate in the signaling cascades of growth factors and tumor necrosis factor-alpha by regulating the intracellular concentrations of H(2)O(2). This chain is Peroxiredoxin-2 (PRDX2), found in Cricetulus griseus (Chinese hamster).